A 783-amino-acid chain; its full sequence is ATP-dependent DNA helicase Hel308 (783 aa).

Residues Q29 and 47–54 contribute to the ATP site; that span reads VPTASGKT. The Helicase ATP-binding domain maps to 34–209; that stretch reads ERGVTEGANL…WLDAELVDSD (176 aa). The DEAH box motif lies at 154-157; it reads DEVH. The region spanning 242–443 is the Helicase C-terminal domain; sequence QTAAVVADTL…EPALRTHVLA (202 aa). The disordered stretch occupies residues 744–783; it reads ETVGHPDPGMDGVAADTDAAPESGGEAGGDEGQASLGDFS.

The protein belongs to the helicase family. Hel308 subfamily. In terms of assembly, monomer.

It catalyses the reaction Couples ATP hydrolysis with the unwinding of duplex DNA by translocating in the 3'-5' direction.. The catalysed reaction is ATP + H2O = ADP + phosphate + H(+). Its function is as follows. DNA-dependent ATPase and 3'-5' DNA helicase that may be involved in repair of stalled replication forks. In Halobacterium salinarum (strain ATCC 700922 / JCM 11081 / NRC-1) (Halobacterium halobium), this protein is ATP-dependent DNA helicase Hel308.